We begin with the raw amino-acid sequence, 266 residues long: Phosphatidylglycerol--prolipoprotein diacylglyceryl transferase (266 aa).

The next 7 membrane-spanning stretches (helical) occupy residues 10-30, 56-76, 92-112, 120-140, 172-192, 200-220, and 234-254; these read VAIA…LVGI, LVFW…VFFY, WEGG…TWWF, FFEL…AGRI, PSQL…LWFY, MAVS…VEFV, and WLTM…GLIA. A 1,2-diacyl-sn-glycero-3-phospho-(1'-sn-glycerol) is bound at residue R139.

This sequence belongs to the Lgt family.

Its subcellular location is the cell inner membrane. The catalysed reaction is L-cysteinyl-[prolipoprotein] + a 1,2-diacyl-sn-glycero-3-phospho-(1'-sn-glycerol) = an S-1,2-diacyl-sn-glyceryl-L-cysteinyl-[prolipoprotein] + sn-glycerol 1-phosphate + H(+). The protein operates within protein modification; lipoprotein biosynthesis (diacylglyceryl transfer). In terms of biological role, catalyzes the transfer of the diacylglyceryl group from phosphatidylglycerol to the sulfhydryl group of the N-terminal cysteine of a prolipoprotein, the first step in the formation of mature lipoproteins. This is Phosphatidylglycerol--prolipoprotein diacylglyceryl transferase from Ectopseudomonas mendocina (strain ymp) (Pseudomonas mendocina).